Here is a 302-residue protein sequence, read N- to C-terminus: Tritrans,polycis-undecaprenyl-diphosphate synthase (geranylgeranyl-diphosphate specific) (302 aa).

Residue D33 is part of the active site. D33 contributes to the Mg(2+) binding site. Substrate-binding positions include 34 to 37 and 78 to 80; these read GNRR and STE. Residue N81 is the Proton acceptor of the active site. Substrate-binding positions include F82, R84, R203, and 209 to 211; that span reads RTS.

The protein belongs to the UPP synthase family. In terms of assembly, homodimer. It depends on Mg(2+) as a cofactor.

The enzyme catalyses geranylgeranyl diphosphate + 7 isopentenyl diphosphate = tri-trans,hepta-cis-undecaprenyl diphosphate + 7 diphosphate. Catalyzes the sequential condensation of isopentenyl diphosphate (IPP) with geranylgeranyl diphosphate (GGPP) to yield (2Z,6Z,10Z,14Z,18Z,22Z,26Z,30E,34E,38E)-undecaprenyl diphosphate (tritrans,heptacis-UPP). It is probably the precursor of glycosyl carrier lipids. The sequence is that of Tritrans,polycis-undecaprenyl-diphosphate synthase (geranylgeranyl-diphosphate specific) from Halobacterium salinarum (strain ATCC 700922 / JCM 11081 / NRC-1) (Halobacterium halobium).